We begin with the raw amino-acid sequence, 195 residues long: Archaetidylinositol phosphate synthase (195 aa).

The next 2 membrane-spanning stretches (helical) occupy residues 27–47 (IALP…AASA) and 54–74 (LITG…DGAV). Residues aspartate 68, aspartate 71, aspartate 89, and aspartate 93 each coordinate Mg(2+). Residue aspartate 93 is the Proton acceptor of the active site. Helical transmembrane passes span 99 to 119 (IIII…LLAL) and 158 to 178 (LAGY…LAAL).

The protein belongs to the CDP-alcohol phosphatidyltransferase class-I family. It depends on Mn(2+) as a cofactor. Requires Mg(2+) as cofactor.

It localises to the cell membrane. The enzyme catalyses CDP-2,3-bis-O-(phytanyl)-sn-glycerol + 1D-myo-inositol 3-phosphate = saturated 1-archaetidyl-1D-myo-inositol 3-phosphate + CMP + H(+). It functions in the pathway lipid metabolism; phospholipid metabolism. Catalyzes the formation of archaetidylinositol phosphate (AIP) from CDP-archaeol (CDP-ArOH or CDP-2,3-bis-(O-phytanyl)-sn-glycerol) and 1L-myo-inositol 1-phosphate (IP or 1D-myo-inositol 3-phosphate). AIP is a precursor of archaetidyl-myo-inositol (AI), an ether-type inositol phospholipid ubiquitously distributed in archaea membranes and essential for glycolipid biosynthesis in archaea. The chain is Archaetidylinositol phosphate synthase from Methanothermobacter thermautotrophicus (strain ATCC 29096 / DSM 1053 / JCM 10044 / NBRC 100330 / Delta H) (Methanobacterium thermoautotrophicum).